Here is a 124-residue protein sequence, read N- to C-terminus: Seripauperin-3 (124 aa).

A helical transmembrane segment spans residues 7-24; sequence IAAGVAAIAAGIAAAPAT.

The protein belongs to the SRP1/TIP1 family. Seripauperin subfamily.

It localises to the membrane. The protein is Seripauperin-3 (PAU3) of Saccharomyces cerevisiae (strain ATCC 204508 / S288c) (Baker's yeast).